The primary structure comprises 432 residues: Glutamate-gated chloride channel subunit beta (432 aa).

Positions 1 to 18 are cleaved as a signal peptide; it reads MSQYMMVAVAAVVAVAGS. Residues 19–249 are Extracellular-facing; that stretch reads SQISRRSTGG…MQLTLKRQFS (231 aa). The N-linked (GlcNAc...) asparagine glycan is linked to Asn52. The L-glutamate site is built by Arg69, Arg88, and Ser155. A disulfide bond links Cys164 and Cys178. Residue Ser184 participates in L-glutamate binding. N-linked (GlcNAc...) asparagine glycosylation is present at Asn219. A disulfide bridge connects residues Cys226 and Cys237. Residues 250–272 form a helical membrane-spanning segment; it reads YYLVQLYGPTTMIVIVSWVSFWI. Residues 273–277 are Cytoplasmic-facing; sequence DMHST. The helical transmembrane segment at 278–299 threads the bilayer; the sequence is AGRVALGVTTLLTMTTMQAAIN. At 300–306 the chain is on the extracellular side; it reads AKLPPVS. A helical transmembrane segment spans residues 307-327; it reads YVKVVDVWLGACQTFVFGALL. The Cytoplasmic segment spans residues 328-402; sequence EYAFVSYQDS…KPDYLPAKID (75 aa). The chain crosses the membrane as a helical span at residues 403–426; sequence YYARFCVPLGFLAFNAIYWTSCLV. The Extracellular segment spans residues 427–432; the sequence is MVSRLV.

Belongs to the ligand-gated ion channel (TC 1.A.9) family. Glutamate-gated chloride channel (TC 1.A.9.4) subfamily. Pentamer. As to expression, expressed in motor neuron commissures at the anterior portion of the worms.

It localises to the postsynaptic cell membrane. Its subcellular location is the cell membrane. Its function is as follows. Glutamate-gated chloride channel subunit; channel properties may be modulated by the formation of heteromeric channels. Glutamate binding triggers a rapidly reversible current, while the anti-helmintic drug ivermectin triggers a permanently open channel configuration. The protein is Glutamate-gated chloride channel subunit beta of Haemonchus contortus (Barber pole worm).